We begin with the raw amino-acid sequence, 321 residues long: uncharacterized protein (321 aa).

Tyrosine 60 (proton donor) is an active-site residue. Histidine 118 provides a ligand contact to substrate.

It belongs to the aldo/keto reductase family.

This is an uncharacterized protein from Schizosaccharomyces pombe (strain 972 / ATCC 24843) (Fission yeast).